A 352-amino-acid polypeptide reads, in one-letter code: Protein Wnt-3a (352 aa).

A signal peptide spans 1-18 (MAPLGYLLVLCSLKQALG). Cystine bridges form between Cys-77/Cys-88, Cys-128/Cys-136, Cys-138/Cys-155, Cys-203/Cys-217, Cys-205/Cys-212, Cys-281/Cys-312, Cys-297/Cys-307, Cys-311/Cys-351, Cys-327/Cys-342, Cys-329/Cys-339, and Cys-334/Cys-335. Asn-87 is a glycosylation site (N-linked (GlcNAc...) asparagine). Ser-209 carries O-palmitoleoyl serine; by PORCN lipidation. N-linked (GlcNAc...) asparagine glycosylation occurs at Asn-298.

The protein belongs to the Wnt family. As to quaternary structure, forms a soluble 1:1 complex with AFM; this prevents oligomerization and is required for prolonged biological activity. The complex with AFM may represent the physiological form in body fluids. Homooligomer; disulfide-linked, leading to inactivation. Interacts with APCDD1 and WLS. Component of the Wnt-Fzd-LRP5-LRP6 signaling complex that contains a WNT protein, a FZD protein and LRP5 or LRP6. Interacts directly in the complex with LRP6. Interacts with PORCN. Interacts with glypican GPC3. Interacts with PKD1 (via extracellular domain). Interacts with FZD5. Proteolytic processing by TIKI1 and TIKI2 promotes oxidation and formation of large disulfide-bond oligomers, leading to inactivation of WNT3A. In terms of processing, disulfide bonds have critical and distinct roles in secretion and activity. Loss of each conserved cysteine in WNT3A results in high molecular weight oxidized Wnt oligomers, which are formed through inter-Wnt disulfide bonding. Post-translationally, palmitoleoylation by PORCN is required for efficient binding to frizzled receptors. Palmitoleoylation is required for proper trafficking to cell surface, vacuolar acidification is critical to release palmitoleoylated WNT3A from WLS in secretory vesicles. Depalmitoleoylated by NOTUM, leading to inhibit Wnt signaling pathway, possibly by promoting disulfide bond formation and oligomerization. In terms of tissue distribution, dorsal portion of the neural tube (developing roof plate), and mesenchyme tissue surrounding the umbilical veins.

It localises to the secreted. The protein resides in the extracellular space. Its subcellular location is the extracellular matrix. Its function is as follows. Ligand for members of the frizzled family of seven transmembrane receptors. Functions in the canonical Wnt signaling pathway that results in activation of transcription factors of the TCF/LEF family. Required for normal embryonic mesoderm development and formation of caudal somites. Required for normal morphogenesis of the developing neural tube. Mediates self-renewal of the stem cells at the bottom on intestinal crypts (in vitro). In Mus musculus (Mouse), this protein is Protein Wnt-3a (Wnt3a).